The sequence spans 341 residues: S-adenosylmethionine:tRNA ribosyltransferase-isomerase (341 aa).

The protein belongs to the QueA family. As to quaternary structure, monomer.

The protein resides in the cytoplasm. It catalyses the reaction 7-aminomethyl-7-carbaguanosine(34) in tRNA + S-adenosyl-L-methionine = epoxyqueuosine(34) in tRNA + adenine + L-methionine + 2 H(+). It functions in the pathway tRNA modification; tRNA-queuosine biosynthesis. Its function is as follows. Transfers and isomerizes the ribose moiety from AdoMet to the 7-aminomethyl group of 7-deazaguanine (preQ1-tRNA) to give epoxyqueuosine (oQ-tRNA). This is S-adenosylmethionine:tRNA ribosyltransferase-isomerase from Halothermothrix orenii (strain H 168 / OCM 544 / DSM 9562).